We begin with the raw amino-acid sequence, 229 residues long: Endonuclease V (229 aa).

Residues Asp36 and Asp104 each contribute to the Mg(2+) site.

The protein belongs to the endonuclease V family. The cofactor is Mg(2+).

It localises to the cytoplasm. The catalysed reaction is Endonucleolytic cleavage at apurinic or apyrimidinic sites to products with a 5'-phosphate.. Its function is as follows. DNA repair enzyme involved in the repair of deaminated bases. Selectively cleaves double-stranded DNA at the second phosphodiester bond 3' to a deoxyinosine leaving behind the intact lesion on the nicked DNA. This Pectobacterium carotovorum subsp. carotovorum (strain PC1) protein is Endonuclease V.